We begin with the raw amino-acid sequence, 430 residues long: Endochitinase 46 (430 aa).

The N-terminal stretch at Met1–Ala22 is a signal peptide. Positions Ser23–Arg35 are excised as a propeptide. Residues Tyr39–Leu408 form the GH18 domain. Chitin contacts are provided by residues Gly103–Thr104 and Gly130–Thr133. Catalysis depends on Glu172, which acts as the Proton donor. Residue Tyr173 coordinates chitin. N-linked (GlcNAc...) asparagine glycosylation occurs at Asn219. Residues Met238 to Asp241 and Trp385 contribute to the chitin site.

It belongs to the glycosyl hydrolase 18 family. Chitinase class V subfamily.

The protein localises to the secreted. It catalyses the reaction Random endo-hydrolysis of N-acetyl-beta-D-glucosaminide (1-&gt;4)-beta-linkages in chitin and chitodextrins.. In terms of biological role, secreted chitinase involved in the degradation of chitin, a component of the cell walls of fungi and exoskeletal elements of some animals (including worms and arthropods). Plays a morphogenetic role during apical growth, cell division and differentiation (cell wall morphogenesis). Also acts as an antifungal agent. Involved in the degradation and further assimilation of phytopathogenic fungi, namely mycoparasitism, the major mechanism accounting for the antagonistic activity against phytopathogenic fungi displayed by Trichoderma. In Trichoderma harzianum (Hypocrea lixii), this protein is Endochitinase 46 (chit46).